We begin with the raw amino-acid sequence, 326 residues long: Aldo-keto reductase family 1 member D1 (326 aa).

NADP(+) is bound by residues Gly22 to Tyr26 and Asp53. Tyr26 provides a ligand contact to substrate. 4 residues coordinate substrate: Tyr58, Trp89, Glu120, and Tyr132. Tyr58 functions as the Proton donor in the catalytic mechanism. Residues Ser169 to Asn170, Gln193, and Tyr219 to Thr224 each bind NADP(+). Position 230 (Trp230) interacts with substrate. Lys273–Asn283 is a binding site for NADP(+).

The protein belongs to the aldo/keto reductase family.

Its subcellular location is the cytoplasm. The catalysed reaction is 5beta-cholestan-3-one + NADP(+) = cholest-4-en-3-one + NADPH + H(+). The enzyme catalyses 4,5beta-dihydrocortisone + NADP(+) = cortisone + NADPH + H(+). It carries out the reaction cortisol + NADPH + H(+) = 5beta-dihydrocortisol + NADP(+). It catalyses the reaction corticosterone + NADPH + H(+) = 5beta-dihydrocorticosterone + NADP(+). The catalysed reaction is 7alpha,12alpha-dihydroxycholest-4-en-3-one + NADPH + H(+) = 7alpha,12alpha-dihydroxy-5beta-cholestan-3-one + NADP(+). The enzyme catalyses 7alpha-hydroxycholest-4-en-3-one + NADPH + H(+) = 7alpha-hydroxy-5beta-cholestan-3-one + NADP(+). It carries out the reaction epitestosterone + NADPH + H(+) = 5beta-dihydroepitestosterone + NADP(+). It catalyses the reaction androst-4-ene-3,17-dione + NADPH + H(+) = 5beta-androstane-3,17-dione + NADP(+). The catalysed reaction is progesterone + NADPH + H(+) = 5beta-pregnan-3,20-dione + NADP(+). The enzyme catalyses 21-hydroxyprogesterone + NADPH + H(+) = 5beta-dihydrodeoxycorticosterone + NADP(+). It carries out the reaction aldosterone + NADPH + H(+) = 5beta-dihydroaldosterone + NADP(+). It catalyses the reaction 17beta-hydroxyandrosta-1,4-dien-3-one + NADPH + H(+) = 17beta-hydroxy-5beta-androst-1-en-3-one + NADP(+). The catalysed reaction is 17beta-hydroxyestr-4-en-3-one + NADPH + H(+) = 17beta-hydroxy-5beta-estran-3-one + NADP(+). The enzyme catalyses 5beta-dihydrotestosterone + NADP(+) = testosterone + NADPH + H(+). It carries out the reaction androst-4-ene-3,11,17-trione + NADPH + H(+) = 17beta-hydroxyandrost-4-ene-3,11-dione + NADP(+). Subject to inhibition by high substrate concentrations. Inhibited by testosterone concentrations above 10 uM. Inhibited by the primary and secondary bile acids chenodeoxycholic acid and ursodeoxycholic acid. In terms of biological role, catalyzes the stereospecific NADPH-dependent reduction of the C4-C5 double bond of bile acid intermediates and steroid hormones carrying a delta(4)-3-one structure to yield an A/B cis-ring junction. This cis-configuration is crucial for bile acid biosynthesis and plays important roles in steroid metabolism. Capable of reducing a broad range of delta-(4)-3-ketosteroids from C18 (such as, 17beta-hydroxyestr-4-en-3-one) to C27 (such as, 7alpha-hydroxycholest-4-en-3-one). The polypeptide is Aldo-keto reductase family 1 member D1 (AKR1D1) (Oryctolagus cuniculus (Rabbit)).